A 348-amino-acid chain; its full sequence is Phenylalanine--tRNA ligase alpha subunit (348 aa).

A Mg(2+)-binding site is contributed by Glu-262.

Belongs to the class-II aminoacyl-tRNA synthetase family. Phe-tRNA synthetase alpha subunit type 1 subfamily. Tetramer of two alpha and two beta subunits. It depends on Mg(2+) as a cofactor.

It localises to the cytoplasm. The enzyme catalyses tRNA(Phe) + L-phenylalanine + ATP = L-phenylalanyl-tRNA(Phe) + AMP + diphosphate + H(+). The polypeptide is Phenylalanine--tRNA ligase alpha subunit (Streptococcus pneumoniae (strain 70585)).